The following is a 488-amino-acid chain: 1-aminocyclopropane-1-carboxylate synthase-like protein 1 (488 aa).

Lys273 is subject to N6-(pyridoxal phosphate)lysine.

This sequence belongs to the class-I pyridoxal-phosphate-dependent aminotransferase family. Homodimer. Expressed in young leaves and flowers. Not expressed in roots.

The sequence is that of 1-aminocyclopropane-1-carboxylate synthase-like protein 1 (ACS1) from Arabidopsis thaliana (Mouse-ear cress).